The primary structure comprises 212 residues: Pyrrolidone-carboxylate peptidase (212 aa).

Active-site residues include E80, C143, and H165.

Belongs to the peptidase C15 family. Homotetramer.

The protein localises to the cytoplasm. It carries out the reaction Release of an N-terminal pyroglutamyl group from a polypeptide, the second amino acid generally not being Pro.. Its function is as follows. Removes 5-oxoproline from various penultimate amino acid residues except L-proline. In Vibrio parahaemolyticus serotype O3:K6 (strain RIMD 2210633), this protein is Pyrrolidone-carboxylate peptidase.